A 329-amino-acid chain; its full sequence is 4-hydroxythreonine-4-phosphate dehydrogenase (329 aa).

Substrate-binding residues include histidine 136 and threonine 137. A divalent metal cation contacts are provided by histidine 166, histidine 211, and histidine 266. Residues lysine 274, asparagine 283, and arginine 292 each coordinate substrate.

It belongs to the PdxA family. In terms of assembly, homodimer. Zn(2+) serves as cofactor. The cofactor is Mg(2+). Co(2+) is required as a cofactor.

Its subcellular location is the cytoplasm. The enzyme catalyses 4-(phosphooxy)-L-threonine + NAD(+) = 3-amino-2-oxopropyl phosphate + CO2 + NADH. It functions in the pathway cofactor biosynthesis; pyridoxine 5'-phosphate biosynthesis; pyridoxine 5'-phosphate from D-erythrose 4-phosphate: step 4/5. Its function is as follows. Catalyzes the NAD(P)-dependent oxidation of 4-(phosphooxy)-L-threonine (HTP) into 2-amino-3-oxo-4-(phosphooxy)butyric acid which spontaneously decarboxylates to form 3-amino-2-oxopropyl phosphate (AHAP). The polypeptide is 4-hydroxythreonine-4-phosphate dehydrogenase (Salmonella typhi).